The sequence spans 250 residues: 5'-nucleotidase SurE (250 aa).

A divalent metal cation contacts are provided by D8, D9, S39, and N95.

Belongs to the SurE nucleotidase family. A divalent metal cation is required as a cofactor.

The protein resides in the cytoplasm. It carries out the reaction a ribonucleoside 5'-phosphate + H2O = a ribonucleoside + phosphate. Its function is as follows. Nucleotidase that shows phosphatase activity on nucleoside 5'-monophosphates. This Syntrophobacter fumaroxidans (strain DSM 10017 / MPOB) protein is 5'-nucleotidase SurE.